The sequence spans 835 residues: Leucine--tRNA ligase (835 aa).

Residues 36-46 (PYPSGKIHVGH) carry the 'HIGH' region motif. The 'KMSKS' region signature appears at 602–606 (KMSKS). K605 serves as a coordination point for ATP.

Belongs to the class-I aminoacyl-tRNA synthetase family.

It localises to the cytoplasm. It catalyses the reaction tRNA(Leu) + L-leucine + ATP = L-leucyl-tRNA(Leu) + AMP + diphosphate. This is Leucine--tRNA ligase from Rickettsia africae (strain ESF-5).